A 259-amino-acid chain; its full sequence is BTB/POZ domain-containing protein KCTD4 (259 aa).

Residues 1-22 (MEHKINRREKEKDYEGKHNSLE) are disordered. The region spanning 33-134 (TLMTLNVGGY…EVKSRWEKEQ (102 aa)) is the BTB domain.

This Bos taurus (Bovine) protein is BTB/POZ domain-containing protein KCTD4 (KCTD4).